The chain runs to 988 residues: Bifunctional glutamine synthetase adenylyltransferase/adenylyl-removing enzyme (988 aa).

Residues Met1–Thr472 form an adenylyl removase region. An adenylyl transferase region spans residues Gly476–Gly988.

The protein belongs to the GlnE family. It depends on Mg(2+) as a cofactor.

It catalyses the reaction [glutamine synthetase]-O(4)-(5'-adenylyl)-L-tyrosine + phosphate = [glutamine synthetase]-L-tyrosine + ADP. The enzyme catalyses [glutamine synthetase]-L-tyrosine + ATP = [glutamine synthetase]-O(4)-(5'-adenylyl)-L-tyrosine + diphosphate. Its function is as follows. Involved in the regulation of glutamine synthetase GlnA, a key enzyme in the process to assimilate ammonia. When cellular nitrogen levels are high, the C-terminal adenylyl transferase (AT) inactivates GlnA by covalent transfer of an adenylyl group from ATP to specific tyrosine residue of GlnA, thus reducing its activity. Conversely, when nitrogen levels are low, the N-terminal adenylyl removase (AR) activates GlnA by removing the adenylyl group by phosphorolysis, increasing its activity. The regulatory region of GlnE binds the signal transduction protein PII (GlnB) which indicates the nitrogen status of the cell. The polypeptide is Bifunctional glutamine synthetase adenylyltransferase/adenylyl-removing enzyme (Agrobacterium fabrum (strain C58 / ATCC 33970) (Agrobacterium tumefaciens (strain C58))).